Consider the following 354-residue polypeptide: Probable protein phosphatase 2C 27 (354 aa).

A PPM-type phosphatase domain is found at 54–319 (RSGDWSDIGG…DNLTAVMVSF (266 aa)). Mn(2+) is bound by residues Asp-98, Gly-99, Asp-267, and Asp-310.

It belongs to the PP2C family. Mg(2+) is required as a cofactor. Mn(2+) serves as cofactor.

The catalysed reaction is O-phospho-L-seryl-[protein] + H2O = L-seryl-[protein] + phosphate. It catalyses the reaction O-phospho-L-threonyl-[protein] + H2O = L-threonyl-[protein] + phosphate. The polypeptide is Probable protein phosphatase 2C 27 (Oryza sativa subsp. japonica (Rice)).